Consider the following 137-residue polypeptide: ATP synthase epsilon chain (137 aa).

The protein belongs to the ATPase epsilon chain family. As to quaternary structure, F-type ATPases have 2 components, CF(1) - the catalytic core - and CF(0) - the membrane proton channel. CF(1) has five subunits: alpha(3), beta(3), gamma(1), delta(1), epsilon(1). CF(0) has three main subunits: a, b and c.

It localises to the cell membrane. Functionally, produces ATP from ADP in the presence of a proton gradient across the membrane. The protein is ATP synthase epsilon chain of Streptococcus agalactiae serotype III (strain NEM316).